The following is a 1116-amino-acid chain: Eukaryotic translation initiation factor 2-alpha kinase 3 (1116 aa).

Residues 1 to 29 (MERAISPGLLVRALLLLLLLLGLAARTVA) form the signal peptide. The Lumenal segment spans residues 30 to 514 (AGRARGLPAP…HYNKNIRKKD (485 aa)). The segment at 77–101 (ALPAAAGEQEPRGPEPDDETELRPR) is disordered. Asn258 carries an N-linked (GlcNAc...) asparagine glycan. A helical transmembrane segment spans residues 515–535 (PVLLLHWWKEIVATILFCIIA). Topologically, residues 536–1116 (TTFIVRRLFH…NNSHSPLPSN (581 aa)) are cytoplasmic. Positions 550 to 571 (RQRKESETQCQTENKYDSVSGE) are disordered. Residues 593–1077 (FEPIQCLGRG…AINIIENAVF (485 aa)) form the Protein kinase domain. ATP is bound at residue 599 to 607 (LGRGGFGVV). Tyr619 carries the post-translational modification Phosphotyrosine; by autocatalysis. Lys622 is an ATP binding site. Residues 647–888 (EHPGIVRYFN…SPKVYLYIQM (242 aa)) are insert loop. The residue at position 715 (Ser715) is a Phosphoserine. Residue Thr802 is modified to Phosphothreonine. Positions 841-863 (KPTSSKSSSEATLSISPPRPTTL) are disordered. Residues 844–856 (SSKSSSEATLSIS) are compositionally biased toward low complexity. Asp937 (proton acceptor) is an active-site residue. A Phosphothreonine modification is found at Thr982. Residues 1090–1116 (QRSRSLSSSGTKHSRQSNNSHSPLPSN) are disordered. Ser1094 is subject to Phosphoserine. Over residues 1105–1116 (QSNNSHSPLPSN) the composition is skewed to polar residues.

Belongs to the protein kinase superfamily. Ser/Thr protein kinase family. GCN2 subfamily. Forms dimers with HSPA5/BIP in resting cells. Homotetramerizes in response to endoplasmic reticulum (ER) stress, leading to its activation. Interacts with HSP90B1/GRP94. Interacts with DNAJC3; inhibiting EIF2AK3/PERK activity. Interacts with ATAD3A; ATAD3A and EIF2S1/eIF-2-alpha occupy a common binding site within the cytoplasmic loop of EIF2AK3/PERK, leading to prevent EIF2AK3/PERK association with its substrate EIF2S1/eIF-2-alpha. Interacts with MFN2. Interacts with TMEM33. Interacts with PDIA6. Interacts with LACC1. Post-translationally, oligomerization of the N-terminal ER luminal domain by ER stress promotes EIF2AK3/PERK trans-autophosphorylation of the C-terminal cytoplasmic kinase domain at multiple residues including Thr-982 on the kinase activation loop. Autophosphorylated at Tyr-619 following endoplasmic reticulum stress, leading to activate its activity. Dephosphorylated at Tyr-619 by PTPN1/PTP1B, leading to inactivate its enzyme activity. Phosphorylation at Thr-802 by AKT (AKT1, AKT2 and/or AKT3) inactivates EIF2AK3/PERK. ADP-ribosylated by PARP16 upon ER stress, which increases kinase activity. As to expression, ubiquitous. A high level expression is seen in secretory tissues.

The protein localises to the endoplasmic reticulum membrane. The catalysed reaction is L-seryl-[protein] + ATP = O-phospho-L-seryl-[protein] + ADP + H(+). It catalyses the reaction L-threonyl-[protein] + ATP = O-phospho-L-threonyl-[protein] + ADP + H(+). It carries out the reaction L-tyrosyl-[protein] + ATP = O-phospho-L-tyrosyl-[protein] + ADP + H(+). Its activity is regulated as follows. Inhibited by HSPA5/BIP in absence of stress. Perturbation in protein folding in the endoplasmic reticulum (ER) promotes reversible dissociation from HSPA5/BIP and oligomerization, resulting in trans-autophosphorylation and kinase activity induction. Inactivated following phosphorylation at Thr-802 by AKT (AKT1, AKT2 and/or AKT3). Inhibited by ATAD3A at mitochondria-endoplasmic reticulum contact sites, providing a safe haven for mitochondrial protein translation during ER stress. Functionally, metabolic-stress sensing protein kinase that phosphorylates the alpha subunit of eukaryotic translation initiation factor 2 (EIF2S1/eIF-2-alpha) in response to various stress, such as unfolded protein response (UPR). Key effector of the integrated stress response (ISR) to unfolded proteins: EIF2AK3/PERK specifically recognizes and binds misfolded proteins, leading to its activation and EIF2S1/eIF-2-alpha phosphorylation. EIF2S1/eIF-2-alpha phosphorylation in response to stress converts EIF2S1/eIF-2-alpha in a global protein synthesis inhibitor, leading to a global attenuation of cap-dependent translation, while concomitantly initiating the preferential translation of ISR-specific mRNAs, such as the transcriptional activators ATF4 and QRICH1, and hence allowing ATF4- and QRICH1-mediated reprogramming. The EIF2AK3/PERK-mediated unfolded protein response increases mitochondrial oxidative phosphorylation by promoting ATF4-mediated expression of COX7A2L/SCAF1, thereby increasing formation of respiratory chain supercomplexes. In contrast to most subcellular compartments, mitochondria are protected from the EIF2AK3/PERK-mediated unfolded protein response due to EIF2AK3/PERK inhibition by ATAD3A at mitochondria-endoplasmic reticulum contact sites. In addition to EIF2S1/eIF-2-alpha, also phosphorylates NFE2L2/NRF2 in response to stress, promoting release of NFE2L2/NRF2 from the BCR(KEAP1) complex, leading to nuclear accumulation and activation of NFE2L2/NRF2. Serves as a critical effector of unfolded protein response (UPR)-induced G1 growth arrest due to the loss of cyclin-D1 (CCND1). Involved in control of mitochondrial morphology and function. In Homo sapiens (Human), this protein is Eukaryotic translation initiation factor 2-alpha kinase 3.